A 285-amino-acid polypeptide reads, in one-letter code: Probable endonuclease 4 (285 aa).

Positions 69, 109, 145, 179, 182, 216, 229, 231, and 261 each coordinate Zn(2+).

It belongs to the AP endonuclease 2 family. The cofactor is Zn(2+).

The enzyme catalyses Endonucleolytic cleavage to 5'-phosphooligonucleotide end-products.. Endonuclease IV plays a role in DNA repair. It cleaves phosphodiester bonds at apurinic or apyrimidinic (AP) sites, generating a 3'-hydroxyl group and a 5'-terminal sugar phosphate. This Shigella flexneri serotype 5b (strain 8401) protein is Probable endonuclease 4.